Consider the following 79-residue polypeptide: Large ribosomal subunit protein uL29 (79 aa).

The protein belongs to the universal ribosomal protein uL29 family.

The protein is Large ribosomal subunit protein uL29 of Nocardia farcinica (strain IFM 10152).